The following is a 357-amino-acid chain: Fluoren-9-ol dehydrogenase (357 aa).

NADP(+)-binding positions include 36-67 (VTGG…TWDD) and Asp87. Tyr198 serves as the catalytic Proton acceptor. Residue Lys202 participates in NADP(+) binding.

It belongs to the short-chain dehydrogenases/reductases (SDR) family.

It catalyses the reaction 9H-fluoren-9-ol + NADP(+) = 9H-fluoren-9-one + NADPH + H(+). The enzyme catalyses 9H-fluoren-9-ol + NAD(+) = 9H-fluoren-9-one + NADH + H(+). It functions in the pathway aromatic compound metabolism. In terms of biological role, catalyzes the dehydrogenation of both 9-fluorenol and 1,1a-dihydroxy-1-hydro-9-fluorenone to produce 9-fluorenone and 2'-carboxy-2,3- dihydroxybiphenyl, respectively. The protein is Fluoren-9-ol dehydrogenase of Terrabacter sp. (strain DBF63).